Consider the following 212-residue polypeptide: MKKTLLGSLILLAFATNAADPQVSTETSGKVTFFGKVVENTCKVKTDSKNMSVVLNDVGKNHLKTKKDTAMPTPFTINLENCSTTTTTNNKPVATKVGAYFYSWKNADENNEYTLKNTKSGNDAAQNVNIQLFDANGTDAIEVVGNGTTDFTHSNTNDVATQQTVNKNHISGKATINGENNVKLHYIARYYATAQAEAGKVESSVDFQIAYE.

A signal peptide spans 1 to 18 (MKKTLLGSLILLAFATNA). Residues Cys42 and Cys82 are joined by a disulfide bond.

Belongs to the fimbrial protein family.

It localises to the fimbrium. Mediates adherence to oropharyngeal epithelial cells. Helps the airway colonization process. This chain is Major fimbrial subunit (hifA), found in Haemophilus influenzae.